The sequence spans 76 residues: Ovarian cancer-related protein 1 (76 aa).

This is Ovarian cancer-related protein 1 (OCR1) from Homo sapiens (Human).